The following is a 318-amino-acid chain: MFMINLLMMIVPILLAVAFLTLVERKVLGYMQLRKGPNVVGPYGLLQPIADAIKLFTKEPLRPLTSSISMFIMAPILALTLALTMWTPLPMPYPLINMNLGILFMLAMSSLAVYSILWSGWASNSKYALIGALRAVAQTISYEVTLAIILLSVLLLSGSFTLPTLITTQEHIWLIVPSWPLAMMWFISTLAETNRAPFDLTEGESELVSGFNVEYAGGPFALFFLAEYANIIMMNIFTTILFLGAFHNPLMPELYTINFVTKSMLLTISFLWVRASYPRFRYDQLMHLLWKNFLPLTLALCMWHVTMPIITAGVPPLT.

A run of 8 helical transmembrane segments spans residues 2-22 (FMIN…FLTL), 68-88 (ISMF…MWTP), 100-120 (LGIL…LWSG), 146-166 (LAII…PTLI), 171-191 (HIWL…STLA), 222-242 (LFFL…TILF), 253-273 (ELYT…FLWV), and 293-313 (FLPL…ITAG).

It belongs to the complex I subunit 1 family. As to quaternary structure, core subunit of respiratory chain NADH dehydrogenase (Complex I) which is composed of 45 different subunits.

The protein localises to the mitochondrion inner membrane. The catalysed reaction is a ubiquinone + NADH + 5 H(+)(in) = a ubiquinol + NAD(+) + 4 H(+)(out). Functionally, core subunit of the mitochondrial membrane respiratory chain NADH dehydrogenase (Complex I) which catalyzes electron transfer from NADH through the respiratory chain, using ubiquinone as an electron acceptor. Essential for the catalytic activity and assembly of complex I. The chain is NADH-ubiquinone oxidoreductase chain 1 (MT-ND1) from Hipposideros armiger terasensis (Formosan leaf-nosed bat).